The chain runs to 1013 residues: Probable outer membrane protein PmpG (1013 aa).

Residues 1–27 form the signal peptide; the sequence is MQTSFHKFFLSMILAYSCCSLSGGGYA. In terms of domain architecture, Autotransporter spans 733 to 1013; sequence GRSYCRGLWV…GLSAGSKVRF (281 aa).

The protein belongs to the PMP outer membrane protein family.

Its subcellular location is the secreted. It is found in the cell wall. It localises to the cell outer membrane. This chain is Probable outer membrane protein PmpG (pmpG), found in Chlamydia trachomatis serovar D (strain ATCC VR-885 / DSM 19411 / UW-3/Cx).